The chain runs to 514 residues: Lysine--tRNA ligase (514 aa).

A compositionally biased stretch (low complexity) spans 1–13; the sequence is MSKPNNQNQQNNQ. Positions 1–21 are disordered; sequence MSKPNNQNQQNNQEPAPEDAN. Mg(2+) contacts are provided by glutamate 422 and glutamate 429.

It belongs to the class-II aminoacyl-tRNA synthetase family. Homodimer. Mg(2+) serves as cofactor.

The protein localises to the cytoplasm. It carries out the reaction tRNA(Lys) + L-lysine + ATP = L-lysyl-tRNA(Lys) + AMP + diphosphate. The polypeptide is Lysine--tRNA ligase (Psychrobacter cryohalolentis (strain ATCC BAA-1226 / DSM 17306 / VKM B-2378 / K5)).